Reading from the N-terminus, the 38-residue chain is Kappa-actitoxin-Bcs3a (38 aa).

The ShKT domain maps to 2–37 (CIDRFPTGTCKHVKKGGSCKNSQKYRINCAKTCGLC). 3 disulfide bridges follow: Cys-2–Cys-37, Cys-11–Cys-30, and Cys-20–Cys-34. Positions 25 to 26 (KY) are crucial for binding to potassium channels.

This sequence belongs to the sea anemone type 1 potassium channel toxin family. Type 1b subfamily.

Its subcellular location is the secreted. It is found in the nematocyst. Inhibits voltage-gated potassium channels (IC(50)=405.0 nM for rKCNA1/Kv1.1, IC(50)=0.03 nM for rKCNA2/Kv1.2, IC(50)=1.31 nM for rKCNA6/Kv1.6, IC(50)=74.11 nM for hKCNA3/Kv1.3, and IC(50)=247.69 nM for insect Shaker IR). Binds the Shaker IR channels in a voltage-independent manner. The sequence is that of Kappa-actitoxin-Bcs3a from Bunodosoma caissarum (Sea anemone).